A 139-amino-acid polypeptide reads, in one-letter code: Acidic phospholipase A2 DE-I (139 aa).

The N-terminal stretch at 1–16 is a signal peptide; that stretch reads MRTLWIMAVLLLGVEG. 7 disulfides stabilise this stretch: C42–C132, C44–C60, C59–C111, C65–C139, C66–C104, C73–C97, and C91–C102. Positions 43, 45, and 47 each coordinate Ca(2+). H63 is a catalytic residue. Residue D64 coordinates Ca(2+). D105 is a catalytic residue.

Requires Ca(2+) as cofactor. Expressed by the venom gland.

The protein resides in the secreted. It carries out the reaction a 1,2-diacyl-sn-glycero-3-phosphocholine + H2O = a 1-acyl-sn-glycero-3-phosphocholine + a fatty acid + H(+). Snake venom phospholipase A2 (PLA2) that inhibits the ADP- and collagen-induced human platelet aggregation. Exhibits high hydrolytic activities and preferred the anionic micelles to the zwitterionic micelles. PLA2 catalyzes the calcium-dependent hydrolysis of the 2-acyl groups in 3-sn-phosphoglycerides. The polypeptide is Acidic phospholipase A2 DE-I (Ovophis okinavensis (Ryukyu Island pit viper)).